Consider the following 88-residue polypeptide: Small ribosomal subunit protein uS17 (88 aa).

Belongs to the universal ribosomal protein uS17 family. In terms of assembly, part of the 30S ribosomal subunit.

One of the primary rRNA binding proteins, it binds specifically to the 5'-end of 16S ribosomal RNA. The polypeptide is Small ribosomal subunit protein uS17 (Prochlorococcus marinus (strain SARG / CCMP1375 / SS120)).